Here is a 580-residue protein sequence, read N- to C-terminus: Arginine--tRNA ligase (580 aa).

A 'HIGH' region motif is present at residues alanine 131 to histidine 141.

The protein belongs to the class-I aminoacyl-tRNA synthetase family. Monomer.

It localises to the cytoplasm. The enzyme catalyses tRNA(Arg) + L-arginine + ATP = L-arginyl-tRNA(Arg) + AMP + diphosphate. This chain is Arginine--tRNA ligase, found in Cereibacter sphaeroides (strain KD131 / KCTC 12085) (Rhodobacter sphaeroides).